The primary structure comprises 207 residues: Thymidylate kinase (207 aa).

7 to 14 (GCEGTGKT) serves as a coordination point for ATP.

This sequence belongs to the thymidylate kinase family.

The enzyme catalyses dTMP + ATP = dTDP + ADP. Phosphorylation of dTMP to form dTDP in both de novo and salvage pathways of dTTP synthesis. The polypeptide is Thymidylate kinase (Aster yellows witches'-broom phytoplasma (strain AYWB)).